A 163-amino-acid chain; its full sequence is D-aminoacyl-tRNA deacylase (163 aa).

The Gly-cisPro motif, important for rejection of L-amino acids motif lies at 141–142 (GP).

This sequence belongs to the DTD family. In terms of assembly, homodimer.

Its subcellular location is the cytoplasm. The enzyme catalyses glycyl-tRNA(Ala) + H2O = tRNA(Ala) + glycine + H(+). The catalysed reaction is a D-aminoacyl-tRNA + H2O = a tRNA + a D-alpha-amino acid + H(+). Its function is as follows. An aminoacyl-tRNA editing enzyme that deacylates mischarged D-aminoacyl-tRNAs. Also deacylates mischarged glycyl-tRNA(Ala), protecting cells against glycine mischarging by AlaRS. Acts via tRNA-based rather than protein-based catalysis; rejects L-amino acids rather than detecting D-amino acids in the active site. By recycling D-aminoacyl-tRNA to D-amino acids and free tRNA molecules, this enzyme counteracts the toxicity associated with the formation of D-aminoacyl-tRNA entities in vivo and helps enforce protein L-homochirality. This chain is D-aminoacyl-tRNA deacylase, found in Neisseria gonorrhoeae (strain ATCC 700825 / FA 1090).